We begin with the raw amino-acid sequence, 174 residues long: Gamma-crystallin A (174 aa).

Beta/gamma crystallin 'Greek key' domains lie at 2–40 (GKITFYEDRGFQGRCYECSSDCPNLQTYFSRCNSIRVDS) and 41–83 (GCWM…RSIP). The connecting peptide stretch occupies residues 84–87 (YTSS). Beta/gamma crystallin 'Greek key' domains lie at 88–128 (HRIR…HVLE) and 129–171 (GCWV…RRVM).

This sequence belongs to the beta/gamma-crystallin family.

In terms of biological role, crystallins are the dominant structural components of the vertebrate eye lens. The sequence is that of Gamma-crystallin A (Cryga) from Mus musculus (Mouse).